The following is an 803-amino-acid chain: Translation initiation factor IF-2 (803 aa).

Disordered stretches follow at residues 95–125 and 138–178; these read PVVE…EKAE and EVKE…EREE. A compositionally biased stretch (polar residues) spans 111 to 121; it reads VPLTSDTTNLN. Positions 138-155 are enriched in basic and acidic residues; it reads EVKEEAKKTPSEKKETPK. Over residues 156 to 167 the composition is skewed to basic residues; it reads KGPRKETRRSRK. The span at 168–178 shows a compositional bias: basic and acidic residues; the sequence is PDKEDKWEREE. In terms of domain architecture, tr-type G spans 302 to 471; the sequence is PRAPVVTIMG…LLQAEVLELK (170 aa). Positions 311-318 are G1; sequence GHVDHGKT. 311–318 is a binding site for GTP; the sequence is GHVDHGKT. The interval 336-340 is G2; it reads GITQH. The G3 stretch occupies residues 357–360; the sequence is DTPG. GTP is bound by residues 357 to 361 and 411 to 414; these read DTPGH and NKID. The interval 411 to 414 is G4; that stretch reads NKID. The G5 stretch occupies residues 447–449; the sequence is SAK.

The protein belongs to the TRAFAC class translation factor GTPase superfamily. Classic translation factor GTPase family. IF-2 subfamily.

The protein localises to the cytoplasm. Functionally, one of the essential components for the initiation of protein synthesis. Protects formylmethionyl-tRNA from spontaneous hydrolysis and promotes its binding to the 30S ribosomal subunits. Also involved in the hydrolysis of GTP during the formation of the 70S ribosomal complex. The chain is Translation initiation factor IF-2 from Coxiella burnetii (strain RSA 331 / Henzerling II).